Consider the following 136-residue polypeptide: NTDITSNGERVKCMQVWPPIGKKKFETLSYLPPLTRDQLLKEVEYLLRKGWVPCLEFELLKGFVYGEHNKSPRYYDGRYWTMWKLPMFGTTDPAQVVKEVDEVVAAYPEAFVRVIGFNNVRQVQCISFIAHTPESY.

Residues 1 to 13 constitute a chloroplast transit peptide; the sequence is NTDITSNGERVKC.

It belongs to the RuBisCO small chain family. Heterohexadecamer of 8 large and 8 small subunits.

It localises to the plastid. The protein localises to the chloroplast. RuBisCO catalyzes two reactions: the carboxylation of D-ribulose 1,5-bisphosphate, the primary event in carbon dioxide fixation, as well as the oxidative fragmentation of the pentose substrate. Both reactions occur simultaneously and in competition at the same active site. Although the small subunit is not catalytic it is essential for maximal activity. This is Ribulose bisphosphate carboxylase small subunit, chloroplastic 1 from Pisum sativum (Garden pea).